We begin with the raw amino-acid sequence, 577 residues long: Anthranilate synthase alpha subunit 1, chloroplastic (577 aa).

A chloroplast-targeting transit peptide spans 1–34 (MASLVLSLRIAPSTPPLGLGGGRFRGRRGAVACR).

This sequence belongs to the anthranilate synthase component I family. In terms of assembly, heterotetramer consisting of two non-identical subunits: a beta subunit and a large alpha subunit.

Its subcellular location is the plastid. It localises to the chloroplast. The catalysed reaction is chorismate + L-glutamine = anthranilate + pyruvate + L-glutamate + H(+). The protein operates within amino-acid biosynthesis; L-tryptophan biosynthesis; L-tryptophan from chorismate: step 1/5. Feedback inhibition by tryptophan. Its function is as follows. Part of a heterotetrameric complex that catalyzes the two-step biosynthesis of anthranilate, an intermediate in the biosynthesis of L-tryptophan. In the first step, the glutamine-binding beta subunit of anthranilate synthase (AS) provides the glutamine amidotransferase activity which generates ammonia as a substrate that, along with chorismate, is used in the second step, catalyzed by the large alpha subunit of AS to produce anthranilate. The protein is Anthranilate synthase alpha subunit 1, chloroplastic (ASA1) of Oryza sativa subsp. indica (Rice).